Consider the following 297-residue polypeptide: Acetyl-coenzyme A carboxylase carboxyl transferase subunit beta (297 aa).

The CoA carboxyltransferase N-terminal domain maps to 25–294 (LWVKCPETGQ…LPPKGRLPRP (270 aa)).

The protein belongs to the AccD/PCCB family. In terms of assembly, acetyl-CoA carboxylase is a heterohexamer composed of biotin carboxyl carrier protein (AccB), biotin carboxylase (AccC) and two subunits each of ACCase subunit alpha (AccA) and ACCase subunit beta (AccD).

The protein resides in the cytoplasm. The catalysed reaction is N(6)-carboxybiotinyl-L-lysyl-[protein] + acetyl-CoA = N(6)-biotinyl-L-lysyl-[protein] + malonyl-CoA. It functions in the pathway lipid metabolism; malonyl-CoA biosynthesis; malonyl-CoA from acetyl-CoA: step 1/1. Its function is as follows. Component of the acetyl coenzyme A carboxylase (ACC) complex. Biotin carboxylase (BC) catalyzes the carboxylation of biotin on its carrier protein (BCCP) and then the CO(2) group is transferred by the transcarboxylase to acetyl-CoA to form malonyl-CoA. The protein is Acetyl-coenzyme A carboxylase carboxyl transferase subunit beta of Xanthobacter autotrophicus (strain ATCC BAA-1158 / Py2).